The following is a 249-amino-acid chain: ATP synthase subunit a, chloroplastic (249 aa).

A run of 5 helical transmembrane segments spans residues 40-60 (QVLITSWVVIAILLGSAVIAI), 97-117 (VPFIGTLFLFIFVSNWSGALL), 136-156 (INTTVALALLTSVAYFYAGLS), 201-221 (LVVVVLVSLVPLVVPIPVMFL), and 222-242 (GLFTSGIQALIFATLAAAYIG).

The protein belongs to the ATPase A chain family. In terms of assembly, F-type ATPases have 2 components, CF(1) - the catalytic core - and CF(0) - the membrane proton channel. CF(1) has five subunits: alpha(3), beta(3), gamma(1), delta(1), epsilon(1). CF(0) has four main subunits: a, b, b' and c.

It localises to the plastid. It is found in the chloroplast thylakoid membrane. Its function is as follows. Key component of the proton channel; it plays a direct role in the translocation of protons across the membrane. This Barbarea verna (Land cress) protein is ATP synthase subunit a, chloroplastic.